We begin with the raw amino-acid sequence, 861 residues long: DNA topoisomerase 1 (861 aa).

One can recognise a Toprim domain in the interval 3–141; sequence KSLVIVESPA…KFSRVVFNEI (139 aa). Positions 9 and 110 each coordinate Mg(2+). The Topo IA-type catalytic domain occupies 157-572; the sequence is NMNRVHAQQA…DFFKKFSEQL (416 aa). The interval 191–196 is interaction with DNA; the sequence is SAGRVQ. Tyr318 functions as the O-(5'-phospho-DNA)-tyrosine intermediate in the catalytic mechanism. 3 consecutive C4-type zinc fingers follow at residues 596–628, 658–685, and 707–732; these read CPIC…KKRC, CDIC…NPSC, and CEKC…NKIC.

This sequence belongs to the type IA topoisomerase family. Monomer. Requires Mg(2+) as cofactor.

The enzyme catalyses ATP-independent breakage of single-stranded DNA, followed by passage and rejoining.. Functionally, releases the supercoiling and torsional tension of DNA, which is introduced during the DNA replication and transcription, by transiently cleaving and rejoining one strand of the DNA duplex. Introduces a single-strand break via transesterification at a target site in duplex DNA. The scissile phosphodiester is attacked by the catalytic tyrosine of the enzyme, resulting in the formation of a DNA-(5'-phosphotyrosyl)-enzyme intermediate and the expulsion of a 3'-OH DNA strand. The free DNA strand then undergoes passage around the unbroken strand, thus removing DNA supercoils. Finally, in the religation step, the DNA 3'-OH attacks the covalent intermediate to expel the active-site tyrosine and restore the DNA phosphodiester backbone. The sequence is that of DNA topoisomerase 1 from Buchnera aphidicola subsp. Acyrthosiphon pisum (strain APS) (Acyrthosiphon pisum symbiotic bacterium).